Reading from the N-terminus, the 296-residue chain is Phosphoribosylaminoimidazole-succinocarboxamide synthase (296 aa).

It belongs to the SAICAR synthetase family.

The catalysed reaction is 5-amino-1-(5-phospho-D-ribosyl)imidazole-4-carboxylate + L-aspartate + ATP = (2S)-2-[5-amino-1-(5-phospho-beta-D-ribosyl)imidazole-4-carboxamido]succinate + ADP + phosphate + 2 H(+). The protein operates within purine metabolism; IMP biosynthesis via de novo pathway; 5-amino-1-(5-phospho-D-ribosyl)imidazole-4-carboxamide from 5-amino-1-(5-phospho-D-ribosyl)imidazole-4-carboxylate: step 1/2. The polypeptide is Phosphoribosylaminoimidazole-succinocarboxamide synthase (Geobacter sp. (strain M21)).